Here is a 126-residue protein sequence, read N- to C-terminus: uncharacterized protein (126 aa).

2 stretches are compositionally biased toward basic residues: residues 21–31 (RKKRKKRKKRR) and 41–83 (RILK…RKRR). Residues 21-83 (RKKRKKRKKR…RSPRKRRKRR (63 aa)) form a disordered region.

This is an uncharacterized protein from Saccharomyces cerevisiae (strain ATCC 204508 / S288c) (Baker's yeast).